A 287-amino-acid polypeptide reads, in one-letter code: MVLSNVKIFRLKSHRAFRIGPMIKAVAGNLLVKRFYQPKLERIPPASLLLKQKIRLAQNGSTTSTENPISFSQTMSEIFSVLQPSAPDLDEDKTSGLKRDHLLTERLNNGELGVIMNKFFNPSSTHNNQLIDTNILLQNFPKLSGNDLDLLDFAINEKMRGNWNDLKQDFIQLWYYKSFGFLGPRTQFVLTNSSPSLRSQFLKLPFTEYNWFLLQNNKNANILPADVQNVVKVFHLDDKRFTWKSIDPFSKAIISFVVFVSIYVWLDESAKQKTKELPAQKSTVISE.

The transit peptide at 1-24 directs the protein to the mitochondrion; that stretch reads MVLSNVKIFRLKSHRAFRIGPMIK. Residues 250 to 266 form a helical membrane-spanning segment; that stretch reads SKAIISFVVFVSIYVWL.

This sequence belongs to the GEP7 family.

The protein resides in the mitochondrion membrane. Involved in respiratory growth and required for cell survival in the absence of prohibitins or GEM1. The chain is Genetic interactor of prohibitin 7, mitochondrial (GEP7) from Saccharomyces cerevisiae (strain YJM789) (Baker's yeast).